Here is a 315-residue protein sequence, read N- to C-terminus: Cyclin-dependent kinase B2-2 (315 aa).

In terms of domain architecture, Protein kinase spans Phe-16–Phe-306. Residues Val-22–Val-30 and Lys-45 contribute to the ATP site. Tyr-27 carries the post-translational modification Phosphotyrosine. Asp-147 serves as the catalytic Proton acceptor. Thr-181 is subject to Phosphothreonine.

This sequence belongs to the protein kinase superfamily. CMGC Ser/Thr protein kinase family. CDC2/CDKX subfamily. Expressed in flowers.

It catalyses the reaction L-seryl-[protein] + ATP = O-phospho-L-seryl-[protein] + ADP + H(+). The enzyme catalyses L-threonyl-[protein] + ATP = O-phospho-L-threonyl-[protein] + ADP + H(+). It carries out the reaction [DNA-directed RNA polymerase] + ATP = phospho-[DNA-directed RNA polymerase] + ADP + H(+). In Arabidopsis thaliana (Mouse-ear cress), this protein is Cyclin-dependent kinase B2-2 (CDKB2-2).